The chain runs to 313 residues: MKTFLILALVATTATTAVRVPVPQLQPKNPSQQQPQEQVPLVQQQQFPGQQQQFPPQQPYPQPQPFPSQQPYLQLQPFPQPQPFLPQLPYPQPQSFPPQQPYPQQRPKYLQPQQPISQQQAQQQQQQQQQQQQQQQQQILQQILQQQLIPCRDVVLQQHNIAHASSQVLQQSTYQLLQQLCCQQLLQIPEQSRCQAIHNVVHAIIMHQQEQQQQLQQQQQQQLQQQQQQQQQQQQPSSQVSFQQPQQQYPSSQGSFQPSQQNPQAQGSVQPQQLPQFAEIRNLALQTLPAMCNVYIPPHCSTTIAPFGIFGTN.

A signal peptide spans 1-20 (MKTFLILALVATTATTAVRV). The span at 22 to 55 (VPQLQPKNPSQQQPQEQVPLVQQQQFPGQQQQFP) shows a compositional bias: low complexity. Disordered regions lie at residues 22-122 (VPQL…QQAQ) and 234-272 (QQPS…VQPQ). Composition is skewed to pro residues over residues 56–68 (PQQP…PFPS) and 78–101 (FPQP…PQQP). Low complexity-rich tracts occupy residues 102-122 (YPQQ…QQAQ) and 234-264 (QQPS…QNPQ).

It belongs to the gliadin/glutenin family. Substrate of transglutaminase.

In terms of biological role, gliadin is the major seed storage protein in wheat. The polypeptide is Alpha/beta-gliadin clone PW8142 (Triticum aestivum (Wheat)).